Here is a 289-residue protein sequence, read N- to C-terminus: Oxygen-dependent coproporphyrinogen-III oxidase (289 aa).

Substrate is bound at residue Ser82. A divalent metal cation is bound by residues His86 and His96. Catalysis depends on His96, which acts as the Proton donor. A substrate-binding site is contributed by 98-100; it reads NYR. Residues His130 and His160 each contribute to the a divalent metal cation site. An important for dimerization region spans residues 224 to 259; that stretch reads YVEFNLVWDRGTIFGLQTNGRIESILMSMPPLVRWE.

It belongs to the aerobic coproporphyrinogen-III oxidase family. Homodimer. A divalent metal cation is required as a cofactor.

It localises to the cytoplasm. It catalyses the reaction coproporphyrinogen III + O2 + 2 H(+) = protoporphyrinogen IX + 2 CO2 + 2 H2O. The protein operates within porphyrin-containing compound metabolism; protoporphyrin-IX biosynthesis; protoporphyrinogen-IX from coproporphyrinogen-III (O2 route): step 1/1. Functionally, involved in the heme and chlorophyll biosynthesis. Catalyzes the aerobic oxidative decarboxylation of propionate groups of rings A and B of coproporphyrinogen-III to yield the vinyl groups in protoporphyrinogen-IX. The polypeptide is Oxygen-dependent coproporphyrinogen-III oxidase (Gloeobacter violaceus (strain ATCC 29082 / PCC 7421)).